A 213-amino-acid chain; its full sequence is MILNIGLIDYGMGNLHSVEQSFKRLNQSLKIISGPNDLSNCDALILPGVGSFDPAMKNLQQTNLIPELKKWVLNNKPLLGICLGLQLLFESSDEGKSKGLGLLKGTIKHLPKSEKQLIPHMGWAELNQDKECPLFKSNSSPQWMYFVHSYSAIPSDKNDIASSVNFGDEKITAVVWKKKLAACQFHPEKSGRSGELLLSNWLAWLKKETKDLY.

The region spanning 4-211 (NIGLIDYGMG…LAWLKKETKD (208 aa)) is the Glutamine amidotransferase type-1 domain. Cys82 functions as the Nucleophile in the catalytic mechanism. Residues His186 and Glu188 contribute to the active site.

In terms of assembly, heterodimer of HisH and HisF.

Its subcellular location is the cytoplasm. The catalysed reaction is 5-[(5-phospho-1-deoxy-D-ribulos-1-ylimino)methylamino]-1-(5-phospho-beta-D-ribosyl)imidazole-4-carboxamide + L-glutamine = D-erythro-1-(imidazol-4-yl)glycerol 3-phosphate + 5-amino-1-(5-phospho-beta-D-ribosyl)imidazole-4-carboxamide + L-glutamate + H(+). It carries out the reaction L-glutamine + H2O = L-glutamate + NH4(+). Its pathway is amino-acid biosynthesis; L-histidine biosynthesis; L-histidine from 5-phospho-alpha-D-ribose 1-diphosphate: step 5/9. In terms of biological role, IGPS catalyzes the conversion of PRFAR and glutamine to IGP, AICAR and glutamate. The HisH subunit catalyzes the hydrolysis of glutamine to glutamate and ammonia as part of the synthesis of IGP and AICAR. The resulting ammonia molecule is channeled to the active site of HisF. This is Imidazole glycerol phosphate synthase subunit HisH from Prochlorococcus marinus (strain SARG / CCMP1375 / SS120).